Consider the following 748-residue polypeptide: NAD(P)H-quinone oxidoreductase subunit 5, chloroplastic (748 aa).

A run of 16 helical transmembrane segments spans residues tryptophan 9–valine 29, tryptophan 40–isoleucine 60, isoleucine 89–valine 109, tyrosine 121–threonine 140, isoleucine 147–threonine 167, glycine 185–phenylalanine 205, leucine 224–phenylalanine 244, threonine 258–alanine 278, leucine 280–isoleucine 300, leucine 327–isoleucine 347, alanine 354–serine 374, threonine 396–serine 416, tryptophan 425–tyrosine 445, leucine 551–phenylalanine 571, phenylalanine 605–leucine 625, and tyrosine 726–leucine 746.

Belongs to the complex I subunit 5 family. NDH is composed of at least 16 different subunits, 5 of which are encoded in the nucleus.

It localises to the plastid. The protein localises to the chloroplast thylakoid membrane. The enzyme catalyses a plastoquinone + NADH + (n+1) H(+)(in) = a plastoquinol + NAD(+) + n H(+)(out). The catalysed reaction is a plastoquinone + NADPH + (n+1) H(+)(in) = a plastoquinol + NADP(+) + n H(+)(out). In terms of biological role, NDH shuttles electrons from NAD(P)H:plastoquinone, via FMN and iron-sulfur (Fe-S) centers, to quinones in the photosynthetic chain and possibly in a chloroplast respiratory chain. The immediate electron acceptor for the enzyme in this species is believed to be plastoquinone. Couples the redox reaction to proton translocation, and thus conserves the redox energy in a proton gradient. This chain is NAD(P)H-quinone oxidoreductase subunit 5, chloroplastic (ndhF), found in Platanus occidentalis (Sycamore).